We begin with the raw amino-acid sequence, 766 residues long: Single-minded homolog 1 (766 aa).

The bHLH domain maps to methionine 1–arginine 53. PAS domains are found at residues glycine 77–histidine 147 and proline 218–glycine 288. Positions threonine 292–threonine 335 constitute a PAC domain. The Single-minded C-terminal domain occupies glutamate 336–serine 766. Residues alanine 353 to threonine 365 are compositionally biased toward polar residues. Disordered stretches follow at residues alanine 353–aspartate 431, tryptophan 528–lysine 563, and serine 642–asparagine 662. The Nuclear localization signal signature appears at arginine 368–tyrosine 387. Residues serine 373–serine 385 are compositionally biased toward low complexity. The segment covering histidine 394 to serine 404 has biased composition (basic and acidic residues). A compositionally biased stretch (polar residues) spans aspartate 649 to asparagine 662.

Efficient DNA binding requires dimerization with another bHLH protein. Heterodimer; forms a heterodimer with ARNT, ARNT2.

The protein localises to the nucleus. Transcriptional factor that may have pleiotropic effects during embryogenesis and in the adult. This chain is Single-minded homolog 1 (SIM1), found in Pan troglodytes (Chimpanzee).